We begin with the raw amino-acid sequence, 894 residues long: Exocyst complex component 2 (894 aa).

The IPT/TIG domain maps to 5–89; the sequence is PVVTGLSPKE…GTSTVQFRAY (85 aa). The segment covering 398–413 has biased composition (basic and acidic residues); it reads HTSKDSGAQEKAKNRD. The interval 398–417 is disordered; it reads HTSKDSGAQEKAKNRDSSQA.

This sequence belongs to the SEC5 family. As to quaternary structure, the exocyst complex is composed of Sec3/Exoc1, Sec5/Exoc2, Sec6/Exoc3, Sec8/Exoc4, Sec10/Exoc5, Sec15/Exoc6, Exo70/Exoc7 and Exo84/Exoc8.

In terms of biological role, component of the exocyst complex involved in the docking of exocytic vesicles with fusion sites on the plasma membrane. The chain is Exocyst complex component 2 from Drosophila melanogaster (Fruit fly).